The primary structure comprises 305 residues: UDP-3-O-acyl-N-acetylglucosamine deacetylase (305 aa).

His-79, His-238, and Asp-242 together coordinate Zn(2+). The active-site Proton donor is His-265.

Belongs to the LpxC family. It depends on Zn(2+) as a cofactor.

The enzyme catalyses a UDP-3-O-[(3R)-3-hydroxyacyl]-N-acetyl-alpha-D-glucosamine + H2O = a UDP-3-O-[(3R)-3-hydroxyacyl]-alpha-D-glucosamine + acetate. It functions in the pathway glycolipid biosynthesis; lipid IV(A) biosynthesis; lipid IV(A) from (3R)-3-hydroxytetradecanoyl-[acyl-carrier-protein] and UDP-N-acetyl-alpha-D-glucosamine: step 2/6. Functionally, catalyzes the hydrolysis of UDP-3-O-myristoyl-N-acetylglucosamine to form UDP-3-O-myristoylglucosamine and acetate, the committed step in lipid A biosynthesis. The polypeptide is UDP-3-O-acyl-N-acetylglucosamine deacetylase (Vibrio parahaemolyticus serotype O3:K6 (strain RIMD 2210633)).